The primary structure comprises 85 residues: Large ribosomal subunit protein eL34 (85 aa).

Belongs to the eukaryotic ribosomal protein eL34 family.

The sequence is that of Large ribosomal subunit protein eL34 from Saccharolobus islandicus (strain M.16.27) (Sulfolobus islandicus).